We begin with the raw amino-acid sequence, 470 residues long: MAKGKIVQVIGPVVDIEFPAEELPSILNAITIKGKSGDIDINLTVEVMQHLGDGITRCIAMSSTDGLTRGMEAVDTGSPIKVPVGEETLGRVFNVLGQTVDHNPAPVGNKEFWPIHRPAPKFDEQETSTQILETGIKVVDLIAPYSRGGKIGLFGGAGVGKTVLIMELIHNIATQHGGYSVFSGVGERTREGNDLWSEMTESGVINKTALVYGQMNEPPGARMRVALTGLTMAEYFRDVQHQDVLLFIDNIFRFIQAGSEVSALLGRMPSAVGYQPTLTTDVGALQERITSTKKGSITSVQAVYVPADDLTDPGPAATFTHLDATTVLSRQIAELGIYPAVDPLDSTSRILDPHVIGEDHYEVARGVQAVLQKYKELQDIIAILGMEELSDADKLTVARARKIQRFLSQPFFVAEQFTGSPGKYVPLKETIRGFKEILEGKYDDLPESAFYMVGSIDEAVEAAKKIKQEA.

155–162 (GGAGVGKT) is a binding site for ATP.

It belongs to the ATPase alpha/beta chains family. In terms of assembly, F-type ATPases have 2 components, CF(1) - the catalytic core - and CF(0) - the membrane proton channel. CF(1) has five subunits: alpha(3), beta(3), gamma(1), delta(1), epsilon(1). CF(0) has three main subunits: a(1), b(2) and c(9-12). The alpha and beta chains form an alternating ring which encloses part of the gamma chain. CF(1) is attached to CF(0) by a central stalk formed by the gamma and epsilon chains, while a peripheral stalk is formed by the delta and b chains.

The protein localises to the cell membrane. The catalysed reaction is ATP + H2O + 4 H(+)(in) = ADP + phosphate + 5 H(+)(out). Its function is as follows. Produces ATP from ADP in the presence of a proton gradient across the membrane. The catalytic sites are hosted primarily by the beta subunits. The chain is ATP synthase subunit beta from Pectinatus frisingensis.